We begin with the raw amino-acid sequence, 741 residues long: Homeobox protein AHox1 (741 aa).

Disordered regions lie at residues 1–30 (MEKMHSKSVSPVPFNNSNNTSLGGLRKSSS), 61–96 (KRRLLDPQNKKKQNRFERYSSSNHAQEQSSEENFCR), 146–183 (VNPLSKYFKPSSNDQLGARRTATSFSSSSEASDSKSCC), 203–226 (ADSDWSEDATGNEADDPDDHINQD), 357–383 (KTEESLRSPSETKQYSPDASTFYPIRT), 476–501 (FDFPPKFGSNNSSTDKPEQEDNNPQT), and 616–642 (QYGHMSSSQNPHSETQNRSEEVRGTVK). A compositionally biased stretch (low complexity) spans 7-19 (KSVSPVPFNNSNN). Residues 63-78 (RLLDPQNKKKQNRFER) show a composition bias toward basic and acidic residues. The segment covering 79 to 92 (YSSSNHAQEQSSEE) has biased composition (polar residues). Positions 169 to 181 (SFSSSSEASDSKS) are enriched in low complexity. Residues 363–375 (RSPSETKQYSPDA) show a composition bias toward polar residues. Residues 616–629 (QYGHMSSSQNPHSE) show a composition bias toward polar residues. Basic and acidic residues predominate over residues 630 to 639 (TQNRSEEVRG). Residues 645–704 (RKWNRAVFSLMQRRGLEKSFQSQKYVAKPERRKLADALSLTDAQVKIWFQNRRMKWRQEI) constitute a DNA-binding region (homeobox). Residues 722–741 (EIEKEKTQTPSDEGEVINVD) form a disordered region.

Belongs to the H2.0 homeobox family. As to expression, expressed in the tissues of endodermal origin.

It localises to the nucleus. This is Homeobox protein AHox1 (AHOX1) from Halocynthia roretzi (Sea squirt).